The chain runs to 120 residues: Synaptobrevin (120 aa).

Residues 1–38 (MSAPPSGPAPDAQGGAPGQPTGPPGAPPNTTSNRRLQQ) are disordered. Topologically, residues 1–98 (MSAPPSGPAP…KRKYWWKNCK (98 aa)) are cytoplasmic. Residues 29–38 (NTTSNRRLQQ) are compositionally biased toward polar residues. The 61-residue stretch at 35–95 (RLQQTQAQVE…AKLKRKYWWK (61 aa)) folds into the v-SNARE coiled-coil homology domain. A helical; Anchor for type IV membrane protein transmembrane segment spans residues 99-118 (MMIMLGGIGAIIVIVIIIYF). Residues 119 to 120 (FT) are Vesicular-facing.

The protein belongs to the synaptobrevin family. As to expression, nervous system specific.

The protein resides in the cytoplasmic vesicle. It is found in the secretory vesicle. It localises to the synaptic vesicle membrane. Its subcellular location is the synapse. The protein localises to the synaptosome. This protein may play a role in packaging, transport or release of neurotransmitters. This Tetronarce californica (Pacific electric ray) protein is Synaptobrevin.